Reading from the N-terminus, the 496-residue chain is Solute carrier family 2, facilitated glucose transporter member 3 (496 aa).

The Cytoplasmic segment spans residues 1 to 10; the sequence is MGTQKVTPAL. The chain crosses the membrane as a helical span at residues 11 to 32; it reads IFAITVATIGSFQFGYNTGVIN. The Extracellular segment spans residues 33-64; that stretch reads APEKIIKEFINKTLTDKGNAPPSEVLLTSLWS. Asn-43 carries N-linked (GlcNAc...) asparagine glycosylation. A helical membrane pass occupies residues 65–85; sequence LSVAIFSVGGMIGSFSVGLFV. The Cytoplasmic segment spans residues 86-90; that stretch reads NRFGR. Residues 91–111 traverse the membrane as a helical segment; that stretch reads RNSMLIVNLLAVTGGCFMGLC. At 112 to 118 the chain is on the extracellular side; the sequence is KVAKSVE. A helical membrane pass occupies residues 119-142; sequence MLILGRLVIGLFCGLCTGFVPMYI. Residues 143 to 153 are Cytoplasmic-facing; sequence GEISPTALRGA. The chain crosses the membrane as a helical span at residues 154–174; that stretch reads FGTLNQLGIVVGILVAQIFGL. Position 159 (Gln-159) interacts with D-glucose. Over 175–183 the chain is Extracellular; the sequence is EFILGSEEL. Residues 184–204 form a helical membrane-spanning segment; the sequence is WPLLLGFTILPAILQSAALPF. Residues 205–269 lie on the Cytoplasmic side of the membrane; it reads CPESPRFLLI…LFRVSSYRQP (65 aa). Phosphothreonine is present on Thr-232. A helical membrane pass occupies residues 270–290; the sequence is IIISIVLQLSQQLSGINAVFY. Residues 277–279 are important for selectivity against fructose; the sequence is QLS. D-glucose is bound by residues 280 to 281 and Asn-286; that span reads QQ. At 291–304 the chain is on the extracellular side; it reads YSTGIFKDAGVQEP. A helical membrane pass occupies residues 305–325; the sequence is IYATIGAGVVNTIFTVVSLFL. Asn-315 provides a ligand contact to D-glucose. Over 326–331 the chain is Cytoplasmic; that stretch reads VERAGR. The chain crosses the membrane as a helical span at residues 332–352; the sequence is RTLHMIGLGGMAFCSTLMTVS. Residues 353–363 are Extracellular-facing; that stretch reads LLLKDNYNGMS. The chain crosses the membrane as a helical span at residues 364–389; it reads FVCIGAILVFVAFFEIGPGPIPWFIV. 2 residues coordinate D-glucose: Glu-378 and Trp-386. The Cytoplasmic portion of the chain corresponds to 390-399; the sequence is AELFSQGPRP. The helical transmembrane segment at 400 to 420 threads the bilayer; it reads AAMAVAGCSNWTSNFLVGLLF. Over 421–429 the chain is Extracellular; that stretch reads PSAAHYLGA. The chain crosses the membrane as a helical span at residues 430–450; the sequence is YVFIIFTGFLITFLAFTFFKV. Residues 451 to 496 lie on the Cytoplasmic side of the membrane; sequence PETRGRTFEDITRAFEGQAHGADRSGKDGVMEMNSIEPAKETTTNV. Phosphoserine is present on residues Ser-475 and Ser-485. Thr-492 bears the Phosphothreonine mark.

This sequence belongs to the major facilitator superfamily. Sugar transporter (TC 2.A.1.1) family. Glucose transporter subfamily. Interacts with SMIM43; the interaction may promote SLC2A3-mediated glucose transport to meet the energy needs of mesendoderm differentiation. Highly expressed in brain. Expressed in many tissues.

The protein localises to the cell membrane. It is found in the perikaryon. The protein resides in the cell projection. It carries out the reaction D-glucose(out) = D-glucose(in). It catalyses the reaction D-galactose(in) = D-galactose(out). With respect to regulation, deoxyglucose transport is inhibited by D-glucose, D-galactose and maltose. Galactose transport is inhibited by D-glucose and maltose. Functionally, facilitative glucose transporter. Can also mediate the uptake of various other monosaccharides across the cell membrane. Mediates the uptake of glucose, 2-deoxyglucose, galactose, mannose, xylose and fucose, and probably also dehydroascorbate. Does not mediate fructose transport. Required for mesendoderm differentiation. This chain is Solute carrier family 2, facilitated glucose transporter member 3, found in Homo sapiens (Human).